A 523-amino-acid chain; its full sequence is Magnesium/proton exchanger 1 (523 aa).

11 helical membrane-spanning segments follow: residues Leu24–Gly44, Ile88–Ile108, Gly125–Met145, Leu157–Ile177, Val185–Ala205, Val325–Pro345, Ile349–Gly369, Ile377–Thr397, Val428–Val448, Leu461–Leu481, and Met495–Ser515.

This sequence belongs to the Ca(2+):cation antiporter (CaCA) (TC 2.A.19) family. MHX subfamily.

The protein localises to the vacuole membrane. Its function is as follows. Vacuolar transporter that exchanges protons with Mg(2+), Zn(2+) and Fe(2+) ions. May control the partitioning of Mg(2+) and Zn(2+) between plant organs. This is Magnesium/proton exchanger 1 (MHX1) from Oryza sativa subsp. japonica (Rice).